A 457-amino-acid polypeptide reads, in one-letter code: Tubulin gamma-2 chain (457 aa).

142 to 148 (AGGTGSG) provides a ligand contact to GTP.

Belongs to the tubulin family. In terms of assembly, interacts with Ote. As to expression, expressed in nurse cells and oocytes of developing egg chambers.

It is found in the cytoplasm. The protein resides in the cytoskeleton. Its subcellular location is the microtubule organizing center. It localises to the centrosome. The protein localises to the spindle. Functionally, tubulin is the major constituent of microtubules. The gamma chain is found at microtubule organizing centers (MTOC) such as the spindle poles or the centrosome, suggesting that it is involved in the minus-end nucleation of microtubule assembly. Required for oocyte activation and consequently for organization of the female meiotic spindle. Essential for centrosome organization and assembly of biastral mitotic spindles in embryos. Plays a role in stabilizing the augmin complex on the meiotic spindle. This Drosophila melanogaster (Fruit fly) protein is Tubulin gamma-2 chain (gammaTub37C).